A 240-amino-acid polypeptide reads, in one-letter code: Large ribosomal subunit protein uL1 (240 aa).

The protein belongs to the universal ribosomal protein uL1 family. Part of the 50S ribosomal subunit.

Its function is as follows. Binds directly to 23S rRNA. The L1 stalk is quite mobile in the ribosome, and is involved in E site tRNA release. In terms of biological role, protein L1 is also a translational repressor protein, it controls the translation of the L11 operon by binding to its mRNA. This chain is Large ribosomal subunit protein uL1, found in Streptomyces griseus subsp. griseus (strain JCM 4626 / CBS 651.72 / NBRC 13350 / KCC S-0626 / ISP 5235).